A 388-amino-acid polypeptide reads, in one-letter code: MIISAASDYRAAAQARLPPFLFHYIDGGAYAEHTLRRNVSDLADVALRQRVLRNMSDLRLSTELFGETLAMPVALAPVGLTGMYARRGEVQAARAAAARGIPFTLSTVSVCPIEEVAPAIERPMWFQLYVLKDRGFMRNALERAKAAGVTTLVFTVDMPTPGARYRDAHSGMSGPNASLRRMLQAVTHPRWAWDVGLLGRPHDLGNISAYRGSPTGLQDYIGWLGANFDPSIAWKDLEWIREFWTGPMVIKGILDPEDARDAVRFGADGIVVSNHGGRQLDGVLSSARALPAIADAVKGELKILADSGIRSGLDVVRMLALGADAVLLGRAFVYALAAAGQAGVENLLTLIEKEMRVAMTLTGTHSIAEISADALSRVTRERAETISP.

One can recognise an FMN hydroxy acid dehydrogenase domain in the interval 1–380 (MIISAASDYR…SADALSRVTR (380 aa)). A substrate-binding site is contributed by Tyr24. 2 residues coordinate FMN: Ser106 and Gln127. Tyr129 is a binding site for substrate. Thr155 is a binding site for FMN. A substrate-binding site is contributed by Arg164. FMN is bound at residue Lys251. His275 (proton acceptor) is an active-site residue. Arg278 is a substrate binding site. An FMN-binding site is contributed by 306–330 (DSGIRSGLDVVRMLALGADAVLLGR).

It belongs to the FMN-dependent alpha-hydroxy acid dehydrogenase family. Requires FMN as cofactor.

It localises to the cell inner membrane. The catalysed reaction is (S)-lactate + A = pyruvate + AH2. Its function is as follows. Catalyzes the conversion of L-lactate to pyruvate. Is coupled to the respiratory chain. The sequence is that of L-lactate dehydrogenase from Xanthomonas euvesicatoria pv. vesicatoria (strain 85-10) (Xanthomonas campestris pv. vesicatoria).